Consider the following 349-residue polypeptide: Hypoxia-inducible factor 1-alpha inhibitor (349 aa).

Residues methionine 1–alanine 10 are compositionally biased toward low complexity. The disordered stretch occupies residues methionine 1 to arginine 51. N-acetylalanine is present on alanine 2. Residues alanine 2–phenylalanine 125 form an interaction with VHL region. The 171-residue stretch at glutamate 142 to alanine 312 folds into the JmjC domain. Tyrosine 145 is a binding site for 2-oxoglutarate. Residues aspartate 152 and glutamine 181 to threonine 183 contribute to the substrate site. Position 196 (threonine 196) interacts with 2-oxoglutarate. Residues histidine 199 and aspartate 201 each contribute to the Fe cation site. Residue aspartate 201–glutamine 203 coordinates substrate. 2-oxoglutarate contacts are provided by asparagine 205 and lysine 214. Arginine 238–glutamine 239 contributes to the substrate binding site. Histidine 279 contacts Fe cation. Asparagine 294 contacts 2-oxoglutarate. Positions 300 and 321 each coordinate substrate.

As to quaternary structure, homodimer; homodimerization is essential for catalytic activity. Interacts with VHL and HIF1A. Part of a complex with VHL, HIF1A and HDAC1 or HDAC2 or HDAC3. Interacts with NFKB1 and NFKBIA. Interacts with NOTCH1, NOTCH2 and NOTCH3 but not with NOTCH4. Interacts with APBA3; binding inhibits HIF1AN binding to HIF1A. Interacts with TNKS2. Interacts with PPP1R12A. Interacts with ASB4. Interacts with UBE3A. Interacts with ANKS3. Interacts with NECAB3; the interaction is indirect and seems to be mediated by APBA3. The cofactor is Fe(2+).

Its subcellular location is the nucleus. It is found in the cytoplasm. It localises to the perinuclear region. The enzyme catalyses L-asparaginyl-[hypoxia-inducible factor alpha subunit] + 2-oxoglutarate + O2 = (3S)-3-hydroxy-L-asparaginyl-[hypoxia-inducible factor alpha subunit] + succinate + CO2. It carries out the reaction L-histidyl-[ankyrin-repeat domain protein] + 2-oxoglutarate + O2 = (3S)-3-hydroxy-L-histidyl-[ankyrin-repeat domain protein] + succinate + CO2. The catalysed reaction is L-asparaginyl-[ankyrin-repeat domain protein] + 2-oxoglutarate + O2 = (3S)-3-hydroxy-L-asparaginyl-[ankyrin-repeat domain protein] + succinate + CO2. It catalyses the reaction L-aspartyl-[ankyrin-repeat domain protein] + 2-oxoglutarate + O2 = (3S)-3-hydroxy-L-aspartyl-[ankyrin-repeat domain protein] + succinate + CO2. In terms of biological role, hydroxylates HIF-1 alpha at 'Asn-803' in the C-terminal transactivation domain (CAD). Functions as an oxygen sensor and, under normoxic conditions, the hydroxylation prevents interaction of HIF-1 with transcriptional coactivators including Cbp/p300-interacting transactivator. Involved in transcriptional repression through interaction with HIF1A, VHL and histone deacetylases. Hydroxylates specific Asn residues within ankyrin repeat domains (ARD) of NFKB1, NFKBIA, NOTCH1, ASB4, PPP1R12A and several other ARD-containing proteins. Also hydroxylates Asp and His residues within ARDs of ANK1 and TNKS2, respectively. Negatively regulates NOTCH1 activity, accelerating myogenic differentiation. Positively regulates ASB4 activity, promoting vascular differentiation. This is Hypoxia-inducible factor 1-alpha inhibitor (HIF1AN) from Homo sapiens (Human).